We begin with the raw amino-acid sequence, 317 residues long: Ataxin-3 homolog (317 aa).

The 172-residue stretch at I7–L178 folds into the Josephin domain. C20 functions as the Nucleophile in the catalytic mechanism. H117 acts as the Proton acceptor in catalysis. N132 is a catalytic residue. 2 UIM domains span residues S219–S239 and E247–G264. Residues R254–K317 form a disordered region. Positions R276–E293 are enriched in polar residues. The span at Q294–K317 shows a compositional bias: basic and acidic residues. The interaction with cdc-48.1 and cdc-48.2 stretch occupies residues R296 to R299.

Forms a complex composed of deubiquitinating enzyme atx-3, adapter ubxn-5 and cdc-48.1. Forms a complex composed of deubiquitinating enzyme atx-3, E4 ubiquitin-protein ligase ufd-2 and cdc-48.1. Interacts (via RRDR motif) with cdc-48.1 (via N-terminus) and cdc-48.2 (via N-terminus); the interaction with cdc-48.1 is not required for atx-3 enzymatic activity. Interacts (via C-terminus) with ubxn-5. May interact with ned-8. Expressed in germline (at protein level). Expressed in spermatheca, pharynx, dorsal and ventral cords, some head neurons, hypodermis, body wall muscles and coelomocytes.

It is found in the cytoplasm. The protein resides in the nucleus. It localises to the nucleolus. It catalyses the reaction Thiol-dependent hydrolysis of ester, thioester, amide, peptide and isopeptide bonds formed by the C-terminal Gly of ubiquitin (a 76-residue protein attached to proteins as an intracellular targeting signal).. Acts as a chain editing deubiquitinating enzyme that binds and cleaves 'Lys-48'-linked polyubiquitin chains, with a preference for chains containing four or more ubiquitin molecules thereby modulating protein degradation by the ubiquitin-proteasome pathway. Probably by regulating the IGF-1-insulin-like pathway, regulates lifespan. Regulates germline DNA double-strand-break repair and apoptosis in response to DNA damage by recruiting E4 ubiquitin-protein ligase ufd-2 to DNA repair foci. Interacts with key regulators of transcription and represses transcription. Acts as a histone-binding protein that regulates transcription. This is Ataxin-3 homolog (atx-3) from Caenorhabditis elegans.